The chain runs to 273 residues: Protein OPG070 (273 aa).

The next 2 helical transmembrane spans lie at 123-143 and 238-260; these read NEFISFLLLTSIPIYNILFWF and FLLFYVPGYSITTKITPAVEYLM.

Belongs to the orthopoxvirus OPG070 family. In terms of processing, phosphorylated by OPG054/F10L kinase in vitro.

The protein resides in the virion. It localises to the host endoplasmic reticulum membrane. The protein localises to the host cytoplasm. Functionally, may play a role in the biogenesis of the viral factories by recruiting and wrapping DNA replication sites in endoplasmic reticulum derived membranes. Later in infection, phosphorylation by the late viral kinase OPG054/F10L might decrease DNA-binding ability and trigger ER membranes disassembly. Binds DNA in vitro. This chain is Protein OPG070 (OPG070), found in Vaccinia virus (strain Western Reserve) (VACV).